The chain runs to 503 residues: Poxin-Schlafen (503 aa).

The poxin-like stretch occupies residues 1–236; the sequence is MFYAHAFGGY…SKEERVDYVL (236 aa). Residue histidine 15 is the Proton donor of the active site. The active-site Shared with catalytic histidine of dimeric partner is the tyrosine 136. The active-site Proton acceptor; shared with catalytic histidine of dimeric partner is lysine 140. A schlafen-like region spans residues 237–503; the sequence is MKRLESIHHL…PDEWVSHIKF (267 aa).

In the N-terminal section; belongs to the poxin family. It in the C-terminal section; belongs to the Schlafen protein family. Subgroup poxviridae B3 subfamily. As to quaternary structure, homodimer.

The enzyme catalyses 2',3'-cGAMP + H2O = Gp(2'-5')Ap(3') + H(+). Nuclease that is responsible for viral evasion of host cGAS-STING innate immunity. Cleaves 2',3'-cGAMP which is produced by host cGAS following recognition of intracellular foreign DNA and blocks the subsequent 2',3'-cGAMP-mediated activation of TMEM173/STING which normally spreads to adjacent cells and activates the interferon and NF-kappa-B immune responses. This chain is Poxin-Schlafen (OPG188), found in Cynomys gunnisoni (Gunnison's prairie dog).